The following is a 353-amino-acid chain: Peroxisome assembly protein 12-A (353 aa).

Topologically, residues 1–19 (MAERGAHITTTSASDDRPS) are peroxisomal matrix. Residues 20-47 (IFEVVAQESLMAAARPALHHIVKVLAES) form a helical membrane-spanning segment. Residues 48 to 51 (NPSR) are Cytoplasmic-facing. The chain crosses the membrane as a helical span at residues 52 to 76 (YGTLWRWFDELYTLLDWLLQQHYLS). The Peroxisomal matrix portion of the chain corresponds to 77–104 (WASASFSENFYGLKRITLGKEVGQRNLP). Residues 105–134 (RKEYWKSLLLLVLIPYLRVKLEKIVNRLRE) traverse the membrane as a helical segment. Residues 135-139 (EQDYS) lie on the Cytoplasmic side of the membrane. A helical transmembrane segment spans residues 140 to 178 (IQNPTSFHKRCYKAILASYPFVKLGWEAWFLFYQLRYIL). Over 179–243 (WNGKNHSPLL…LGAVALSVSS (65 aa)) the chain is Peroxisomal matrix. Residues 244–271 (SLSLGVFFLQFLDWWYSAENQETLKSLN) traverse the membrane as a helical segment. Residues 272 to 353 (NLPVPPPPIH…HLIKLYTPDG (82 aa)) lie on the Cytoplasmic side of the membrane. 4 residues coordinate Zn(2+): cysteine 298, cysteine 301, cysteine 319, and cysteine 322. The RING-type; degenerate zinc finger occupies 298–337 (CPLCRKVRVNDTALGTSGYVFCYRCAYYYVKTHQRCPVSG).

The protein belongs to the pex2/pex10/pex12 family. As to quaternary structure, component of the PEX2-PEX10-PEX12 retrotranslocation channel.

The protein localises to the peroxisome membrane. The protein operates within protein modification; protein ubiquitination. Functionally, component of a retrotranslocation channel required for peroxisome organization by mediating export of the PEX5 receptor from peroxisomes to the cytosol, thereby promoting PEX5 recycling. The retrotranslocation channel is composed of PEX2, PEX10 and PEX12; each subunit contributing transmembrane segments that coassemble into an open channel that specifically allows the passage of PEX5 through the peroxisomal membrane. PEX12 also regulates PEX5 recycling by activating the E3 ubiquitin-protein ligase activity of PEX10. When PEX5 recycling is compromised, PEX12 stimulates PEX10-mediated polyubiquitination of PEX5, leading to its subsequent degradation. The chain is Peroxisome assembly protein 12-A from Xenopus laevis (African clawed frog).